The following is a 464-amino-acid chain: GPI mannosyltransferase 2 (464 aa).

Over 1 to 70 (MYYIGHPSYY…MTRSGYNYFK (70 aa)) the chain is Cytoplasmic. A helical transmembrane segment spans residues 71–91 (GICVCTFLLSTILYLGIAVIM). Residues 92–166 (SHLCVFDDTA…ISFLAFRSKD (75 aa)) lie on the Lumenal side of the membrane. N-linked (GlcNAc...) asparagine glycans are attached at residues asparagine 108 and asparagine 139. Residues 167–187 (VVLLGIVSCFASIFFHAIACY) form a helical membrane-spanning segment. Topologically, residues 188 to 219 (ALYLLTKSIFSNQKMTAYTVIFYCFSPSGIYM) are cytoplasmic. Residues 220–240 (SVGYTESLFAAFSFLGLLLFI) form a helical membrane-spanning segment. At 241 to 260 (KKQQYPAAFLWSLATLIRSN) the chain is on the lumenal side. Residues 261–281 (GIFWCIFFGMPAIGTLKISLE) form a helical membrane-spanning segment. Over 282 to 289 (RLQLTFMQ) the chain is Cytoplasmic. Residues 290 to 309 (VSQLVGYGTKCLIILVPFFY) form a helical membrane-spanning segment. Residues 310–356 (NQYLGFKLFCPGVAWCNKSLPLIYPAVQEKYWNVGFLRYWTLNNIPN) lie on the Lumenal side of the membrane. Residue asparagine 326 is glycosylated (N-linked (GlcNAc...) asparagine). Residues 357–377 (FLFALLSIIPILFALFYSISG) form a helical membrane-spanning segment. The Cytoplasmic portion of the chain corresponds to 378 to 388 (STLHSFRSIKS). A helical transmembrane segment spans residues 389 to 409 (HLVLSALYLYIGCFHMHTQVL). Residues 410–440 (NRMSSALPLLYWSMAHATLYAKSRNLKAFGH) are Lumenal-facing. A helical membrane pass occupies residues 441–461 (CILFVWIVYTVIQAGLYGSFL). The Cytoplasmic portion of the chain corresponds to 462 to 464 (PPA).

This sequence belongs to the PIGV family. As to quaternary structure, part of the GPI mannosyltransferase 2 complex composed of gpi18 and C167.09.

It is found in the endoplasmic reticulum membrane. It functions in the pathway glycolipid biosynthesis; glycosylphosphatidylinositol-anchor biosynthesis. In terms of biological role, mannosyltransferase involved in glycosylphosphatidylinositol-anchor biosynthesis. Responsible for the transfer of the second mannose to the glycosylphosphatidylinositol during GPI precursor assembly. The sequence is that of GPI mannosyltransferase 2 (gpi18) from Schizosaccharomyces pombe (strain 972 / ATCC 24843) (Fission yeast).